We begin with the raw amino-acid sequence, 196 residues long: uncharacterized protein (196 aa).

A helical membrane pass occupies residues 11-31 (ICGFLLVILTIGGVLGGVYLV).

It is found in the membrane. This is an uncharacterized protein from Mycoplasma genitalium (strain ATCC 33530 / DSM 19775 / NCTC 10195 / G37) (Mycoplasmoides genitalium).